A 197-amino-acid polypeptide reads, in one-letter code: Dephospho-CoA kinase (197 aa).

Positions 2–197 (IIGITGGIAS…SALLSLANPR (196 aa)) constitute a DPCK domain. 10 to 15 (ASGKST) is an ATP binding site.

This sequence belongs to the CoaE family.

Its subcellular location is the cytoplasm. It carries out the reaction 3'-dephospho-CoA + ATP = ADP + CoA + H(+). It functions in the pathway cofactor biosynthesis; coenzyme A biosynthesis; CoA from (R)-pantothenate: step 5/5. In terms of biological role, catalyzes the phosphorylation of the 3'-hydroxyl group of dephosphocoenzyme A to form coenzyme A. The polypeptide is Dephospho-CoA kinase (Streptococcus pyogenes serotype M28 (strain MGAS6180)).